We begin with the raw amino-acid sequence, 326 residues long: Beta-ketoacyl-[acyl-carrier-protein] synthase III (326 aa).

Active-site residues include Cys-112 and His-251. An ACP-binding region spans residues 252-256 (QANSR). Asn-281 is an active-site residue.

It belongs to the thiolase-like superfamily. FabH family. Homodimer.

The protein localises to the cytoplasm. It carries out the reaction malonyl-[ACP] + acetyl-CoA + H(+) = 3-oxobutanoyl-[ACP] + CO2 + CoA. Its pathway is lipid metabolism; fatty acid biosynthesis. Its function is as follows. Catalyzes the condensation reaction of fatty acid synthesis by the addition to an acyl acceptor of two carbons from malonyl-ACP. Catalyzes the first condensation reaction which initiates fatty acid synthesis and may therefore play a role in governing the total rate of fatty acid production. Possesses both acetoacetyl-ACP synthase and acetyl transacylase activities. Its substrate specificity determines the biosynthesis of branched-chain and/or straight-chain of fatty acids. In Clostridium botulinum (strain Kyoto / Type A2), this protein is Beta-ketoacyl-[acyl-carrier-protein] synthase III.